The chain runs to 373 residues: MEISYYEILEITQNADKETIKKAYRKMALKYHPDRNQGDKEAEDKFKLVNEAYEVLSNDEKRAIYDRYGKDALKGGGFGSSSSGFGGFEDLGDIFSSFFGEGFGSSRRRKSSNDEKIPSDFIVNLKLSFKEAVFGCKKNIDFTYKCSCKTCNGTGAKDGKLQTCPKCQGRGQVGVSQGFITFAQTCPDCQGIGEKASEKCSDCKGLGYNESKNSVELNIPEGVDTGMKLRVNAKGNILKNGTRGDMYVKIIAAEDDTFIRDDDDIYIEFPVFFTQAILGESIKVPTIRGEATLNLPKGAKDGQRFVLEKEGVKDVHSSRIGNQIVQISIKFPTSLNDEQKELLEKLSESFGIKDGMHQEQKGLFEKIANWFKS.

One can recognise a J domain in the interval 4-69 (SYYEILEITQ…EKRAIYDRYG (66 aa)). Residues 135 to 212 (GCKKNIDFTY…CKGLGYNESK (78 aa)) form a CR-type zinc finger. Residues cysteine 148, cysteine 151, cysteine 164, cysteine 167, cysteine 186, cysteine 189, cysteine 200, and cysteine 203 each contribute to the Zn(2+) site. CXXCXGXG motif repeat units lie at residues 148 to 155 (CKTCNGTG), 164 to 171 (CPKCQGRG), 186 to 193 (CPDCQGIG), and 200 to 207 (CSDCKGLG).

This sequence belongs to the DnaJ family. In terms of assembly, homodimer. Zn(2+) serves as cofactor.

It localises to the cytoplasm. Participates actively in the response to hyperosmotic and heat shock by preventing the aggregation of stress-denatured proteins and by disaggregating proteins, also in an autonomous, DnaK-independent fashion. Unfolded proteins bind initially to DnaJ; upon interaction with the DnaJ-bound protein, DnaK hydrolyzes its bound ATP, resulting in the formation of a stable complex. GrpE releases ADP from DnaK; ATP binding to DnaK triggers the release of the substrate protein, thus completing the reaction cycle. Several rounds of ATP-dependent interactions between DnaJ, DnaK and GrpE are required for fully efficient folding. Also involved, together with DnaK and GrpE, in the DNA replication of plasmids through activation of initiation proteins. In Campylobacter jejuni (strain RM1221), this protein is Chaperone protein DnaJ.